Reading from the N-terminus, the 646-residue chain is MSKNIYPVPTHIKNTALVDNDKYNKMYKHSIDDPQSFWAEHGKRLDWFTPYSKVKNTTFDKGHINIKWYEDGYLNASYNCIDRHLKTKANKVALIWEGDNPSQSEHITYQKLHDEVAKFANGLKKLGVQKGDRVAIYMPMSPQAIYAMQGCARIGAIHSVIFGGFSPSAIADRIKDSGAKVVITSDEGRRAGNCVPLKANVDEAVLQESVTSIEHVIVHQLTGGDVDWHDHDIWWHDLVADEEPVCEPEVMNAEDPLFILYTSGSTGQPKGVVHTTGGYLVYASMTHEYIFDVKEDDVFWCSADVGWITGHSYIAYGPLVNGCTQVVFEGVPTYPTAGRMGEVVDKHGVTILYTAPTAIRALMAKGDEPVASSHRNSLRILGSVGEPINPEAWNWYYEQIGKSNCPIVDTWWQTETGGIMITPLPGATDLKPGSATRPFFGIAPAIFDAEGNTLEGEADGNLVILDSWPSQARTIYGDHERFEQTYFSTYPGVYFCGDGCRRDEDGYYWITGRVDDVLNISGHRLGTAEIESALVAHPAVAEAAVVGYPHDIKGQGIYVYITPNEGITVSDELTKEIRNWVRKELSPIASPDMIQWSPGLPKTRSGKIMRRILRKIAANEHEQLGDTSTLADPSVVDELIENRLNR.

CoA is bound by residues 190-193 (RAGN) and Thr309. ATP contacts are provided by residues 385–387 (GEP), 409–414 (DTWWQT), Asp498, and Arg513. Ser521 serves as a coordination point for CoA. Arg524 is an ATP binding site. Mg(2+)-binding residues include Val535, His537, and Val540. Residue Arg582 coordinates CoA. Position 607 is an N6-acetyllysine (Lys607).

This sequence belongs to the ATP-dependent AMP-binding enzyme family. Requires Mg(2+) as cofactor. In terms of processing, acetylated. Deacetylation by the SIR2-homolog deacetylase activates the enzyme.

It carries out the reaction acetate + ATP + CoA = acetyl-CoA + AMP + diphosphate. Functionally, catalyzes the conversion of acetate into acetyl-CoA (AcCoA), an essential intermediate at the junction of anabolic and catabolic pathways. AcsA undergoes a two-step reaction. In the first half reaction, AcsA combines acetate with ATP to form acetyl-adenylate (AcAMP) intermediate. In the second half reaction, it can then transfer the acetyl group from AcAMP to the sulfhydryl group of CoA, forming the product AcCoA. This chain is Acetyl-coenzyme A synthetase, found in Pseudoalteromonas translucida (strain TAC 125).